The primary structure comprises 280 residues: Large ribosomal subunit protein uL2cz/uL2cy (280 aa).

Disordered regions lie at residues 1 to 25 (MAIHLYKTSTPSTRNGAVDSQVKSN) and 231 to 280 (PVDH…RRTK).

The protein belongs to the universal ribosomal protein uL2 family. Part of the 50S ribosomal subunit.

It localises to the plastid. Its subcellular location is the chloroplast. In Platanus occidentalis (Sycamore), this protein is Large ribosomal subunit protein uL2cz/uL2cy (rpl2-A).